The primary structure comprises 62 residues: Small ribosomal subunit protein eS27 (62 aa).

The Zn(2+) site is built by C17, C20, C36, and C39. The C4-type zinc-finger motif lies at 17–39 (CNDCENEQIIFGSASRKITCVVC).

It belongs to the eukaryotic ribosomal protein eS27 family. As to quaternary structure, part of the 30S ribosomal subunit. Requires Zn(2+) as cofactor.

This chain is Small ribosomal subunit protein eS27, found in Methanosarcina mazei (strain ATCC BAA-159 / DSM 3647 / Goe1 / Go1 / JCM 11833 / OCM 88) (Methanosarcina frisia).